The primary structure comprises 880 residues: MEIYRKSAAETFTQLEATEKGLTTSEVTKRQEKYGFNELKNKKKDPLWKLFLETFKDPMVIVLVIAALVQLVLGEVVESLIIFLVLIVNSIISVVQTRKAESSLDALREMSAPVAKVIRDGSKQSIHARELVPGDVVILDAGDFVPADGRLFESGSLKIDEGMLTGESEAVEKYIDTIPDEVGLGDRVNMVFSGSLVVYGRGMFVVTGTASETEIGKIAGLLETAEAKQTPLQRKLESFSKKLGLGILALCVLIFAVEAGRVLLGDNSADMATAILNAFMFAVAVAVAAIPEALSSIVTIVLAVGTNKMAKQHAIIRKLPAVETLGSTSVICTDKTGTLTQNKMTVVDYYLPDGTKENFPESPENWSEGERRLIHIAVLCNDSNINSEGKELGDPTEVALIAFSNKNNQDYNEIREKFIREGEIPFDSDRKLMSTLHTFNENKAMLTKGGPDVMFARCSYVFLDGEEKPMTEEILAKLKETNEEFSNQALRVLAYGYKRMPADTTELKLEDEQDIVLVGLTAMIDPPREAVYASIEESKKAGIRTVMITGDHKTTAQAIGRDIGLMDADDIALTGQELDAMPEEELDKKLEHIAVYARVSPENKIRIVKAWQKKGKITAMTGDGVNDAPALKQADIGVAMGSGTDVAKDSAAMILTDDNFVSIVDAVGVGRTVFDNIKKSIAYLFAGNLGAIIAILFALVLDWINPFTALQLLFINLVNDSLPAIALGMEKAEPDVMKRKPRDINEGIFAGGTMRAVISRGVLIGIAVIISQYIGMQISPEMSVAMAFTTLILARTLQTFAARSNVQTAFGAGFFSNKYVIGAVLLCFVLYGITVLPGAREIFSIPASFGLHEWSIAAGLALAAVVMMEIIKVVQNKFFK.

4 consecutive transmembrane segments (helical) span residues 47-67 (LWKL…VIAA), 68-88 (LVQL…VLIV), 243-263 (LGLG…GRVL), and 271-291 (MATA…AAIP). Ca(2+) is bound by residues valine 287, alanine 288, isoleucine 290, and glutamate 292. Residue aspartate 334 is the 4-aspartylphosphate intermediate of the active site. The next 5 helical transmembrane spans lie at 681-701 (IAYL…ALVL), 707-727 (FTAL…AIAL), 756-776 (AVIS…YIGM), 819-839 (YVIG…LPGA), and 854-874 (WSIA…IKVV). The Ca(2+) site is built by asparagine 716 and aspartate 720.

The protein belongs to the cation transport ATPase (P-type) (TC 3.A.3) family. Type IIA subfamily.

It localises to the cell membrane. It carries out the reaction Ca(2+)(in) + ATP + H2O = Ca(2+)(out) + ADP + phosphate + H(+). Phosphorylation is inhibited by EGTA and vanadate. ATPase activity is stimulated by Sr(2+). Inhibited by very high concentrations of cyclopiazonic acid (CPA). In terms of biological role, catalyzes the hydrolysis of ATP coupled with the transport of calcium. The transport is electrogenic with a probable ATP:Ca(2+):H(+) stoichiometry of 1:1:1. May have an important role in survival of the bacterium when stressed by a combination of a high calcium concentration and alkaline pH. The polypeptide is Calcium-transporting ATPase lmo0841 (Listeria monocytogenes serovar 1/2a (strain ATCC BAA-679 / EGD-e)).